The following is a 290-amino-acid chain: Diaminopimelate epimerase (290 aa).

Substrate-binding residues include N14 and N67. The active-site Proton donor is the C76. Substrate-binding positions include 77–78 (GN), N166, N199, and 217–218 (ER). C226 serves as the catalytic Proton acceptor. 227–228 (GT) lines the substrate pocket.

The protein belongs to the diaminopimelate epimerase family. In terms of assembly, homodimer.

Its subcellular location is the cytoplasm. It catalyses the reaction (2S,6S)-2,6-diaminopimelate = meso-2,6-diaminopimelate. It participates in amino-acid biosynthesis; L-lysine biosynthesis via DAP pathway; DL-2,6-diaminopimelate from LL-2,6-diaminopimelate: step 1/1. Its function is as follows. Catalyzes the stereoinversion of LL-2,6-diaminopimelate (L,L-DAP) to meso-diaminopimelate (meso-DAP), a precursor of L-lysine and an essential component of the bacterial peptidoglycan. The protein is Diaminopimelate epimerase of Geobacillus thermodenitrificans (strain NG80-2).